The primary structure comprises 273 residues: HMP-PP phosphatase (273 aa).

Asp-8 functions as the Nucleophile in the catalytic mechanism. The Mg(2+) site is built by Asp-8, Asp-10, and Asp-212.

This sequence belongs to the HAD-like hydrolase superfamily. Cof family. Mg(2+) is required as a cofactor.

It catalyses the reaction 4-amino-2-methyl-5-(diphosphooxymethyl)pyrimidine + H2O = 4-amino-2-methyl-5-(phosphooxymethyl)pyrimidine + phosphate + H(+). In terms of biological role, catalyzes the hydrolysis of 4-amino-2-methyl-5-hydroxymethylpyrimidine pyrophosphate (HMP-PP) to 4-amino-2-methyl-5-hydroxymethylpyrimidine phosphate (HMP-P). The sequence is that of HMP-PP phosphatase from Yersinia pestis bv. Antiqua (strain Antiqua).